The primary structure comprises 271 residues: Probable ribosomal RNA small subunit methyltransferase A (271 aa).

S-adenosyl-L-methionine-binding residues include H19, L21, G46, E67, D92, and N107.

Belongs to the class I-like SAM-binding methyltransferase superfamily. rRNA adenine N(6)-methyltransferase family. RsmA subfamily.

The protein resides in the cytoplasm. In terms of biological role, specifically dimethylates two adjacent adenosines in the loop of a conserved hairpin near the 3'-end of 16S rRNA in the 30S particle. May play a critical role in biogenesis of 30S subunits. The polypeptide is Probable ribosomal RNA small subunit methyltransferase A (Methanosarcina mazei (strain ATCC BAA-159 / DSM 3647 / Goe1 / Go1 / JCM 11833 / OCM 88) (Methanosarcina frisia)).